The sequence spans 431 residues: Serine--tRNA ligase (431 aa).

Thr235–Glu237 is an L-serine binding site. Residues Arg266–Glu268 and Val282 each bind ATP. Glu289 provides a ligand contact to L-serine. Glu353–Ser356 serves as a coordination point for ATP. An L-serine-binding site is contributed by Ser389.

The protein belongs to the class-II aminoacyl-tRNA synthetase family. Type-1 seryl-tRNA synthetase subfamily. As to quaternary structure, homodimer. The tRNA molecule binds across the dimer.

It localises to the cytoplasm. The enzyme catalyses tRNA(Ser) + L-serine + ATP = L-seryl-tRNA(Ser) + AMP + diphosphate + H(+). The catalysed reaction is tRNA(Sec) + L-serine + ATP = L-seryl-tRNA(Sec) + AMP + diphosphate + H(+). The protein operates within aminoacyl-tRNA biosynthesis; selenocysteinyl-tRNA(Sec) biosynthesis; L-seryl-tRNA(Sec) from L-serine and tRNA(Sec): step 1/1. Catalyzes the attachment of serine to tRNA(Ser). Is also able to aminoacylate tRNA(Sec) with serine, to form the misacylated tRNA L-seryl-tRNA(Sec), which will be further converted into selenocysteinyl-tRNA(Sec). The chain is Serine--tRNA ligase from Pelodictyon phaeoclathratiforme (strain DSM 5477 / BU-1).